We begin with the raw amino-acid sequence, 155 residues long: Ribosome maturation factor RimP (155 aa).

It belongs to the RimP family.

It localises to the cytoplasm. Functionally, required for maturation of 30S ribosomal subunits. The protein is Ribosome maturation factor RimP of Bacteroides fragilis (strain ATCC 25285 / DSM 2151 / CCUG 4856 / JCM 11019 / LMG 10263 / NCTC 9343 / Onslow / VPI 2553 / EN-2).